The following is an 89-amino-acid chain: Small ribosomal subunit protein uS14A (89 aa).

It belongs to the universal ribosomal protein uS14 family. In terms of assembly, part of the 30S ribosomal subunit. Contacts proteins S3 and S10.

Binds 16S rRNA, required for the assembly of 30S particles and may also be responsible for determining the conformation of the 16S rRNA at the A site. The chain is Small ribosomal subunit protein uS14A from Listeria monocytogenes serotype 4b (strain F2365).